We begin with the raw amino-acid sequence, 150 residues long: Large ribosomal subunit protein bL9 (150 aa).

The protein belongs to the bacterial ribosomal protein bL9 family.

Functionally, binds to the 23S rRNA. The chain is Large ribosomal subunit protein bL9 from Corynebacterium glutamicum (strain ATCC 13032 / DSM 20300 / JCM 1318 / BCRC 11384 / CCUG 27702 / LMG 3730 / NBRC 12168 / NCIMB 10025 / NRRL B-2784 / 534).